Consider the following 225-residue polypeptide: Ribonuclease 3 (225 aa).

The 123-residue stretch at 5 to 127 (MNKLTSKLGY…IIGAIYLDSD (123 aa)) folds into the RNase III domain. Mg(2+) is bound at residue E40. The active site involves D44. Mg(2+) contacts are provided by D113 and E116. Residue E116 is part of the active site. One can recognise a DRBM domain in the interval 154–224 (DPKTRLQEFL…AETALEQLTN (71 aa)).

It belongs to the ribonuclease III family. In terms of assembly, homodimer. It depends on Mg(2+) as a cofactor.

The protein resides in the cytoplasm. The catalysed reaction is Endonucleolytic cleavage to 5'-phosphomonoester.. In terms of biological role, digests double-stranded RNA. Involved in the processing of primary rRNA transcript to yield the immediate precursors to the large and small rRNAs (23S and 16S). Processes some mRNAs, and tRNAs when they are encoded in the rRNA operon. Processes pre-crRNA and tracrRNA of type II CRISPR loci if present in the organism. This Vibrio cholerae serotype O1 (strain ATCC 39315 / El Tor Inaba N16961) protein is Ribonuclease 3.